Reading from the N-terminus, the 206-residue chain is MATTIKLEGEARSEFGKGVARRLRVANKIPATIYAGGEEPAFVTLPMRETTLALRHTNALFTIAFDGNTKMAVVKDVQKNPVKRIIEHVDFLEVKAGEKIDVEVPVFVEGTPKGAAVAFVDIQELKVRADVANLPEKIVVSVEGLTDGTKVFAKDVVLPEGVELDVEDPEESVVTVEVPEDASESTAAPEAAAPAADAAAPAADAK.

Positions 168-206 are disordered; sequence DPEESVVTVEVPEDASESTAAPEAAAPAADAAAPAADAK. A compositionally biased stretch (low complexity) spans 184–206; the sequence is ESTAAPEAAAPAADAAAPAADAK.

The protein belongs to the bacterial ribosomal protein bL25 family. CTC subfamily. In terms of assembly, part of the 50S ribosomal subunit; part of the 5S rRNA/L5/L18/L25 subcomplex. Contacts the 5S rRNA. Binds to the 5S rRNA independently of L5 and L18.

This is one of the proteins that binds to the 5S RNA in the ribosome where it forms part of the central protuberance. This is Large ribosomal subunit protein bL25 from Bifidobacterium longum (strain DJO10A).